Reading from the N-terminus, the 375-residue chain is POU domain, class 3, transcription factor 1 (375 aa).

Disordered regions lie at residues 1–29 (MAATAQYLPRNNSLPSNPLMHPDSDRMHQ), 56–139 (MSLT…QPLI), and 151–200 (MLGP…PSSD). 3 stretches are compositionally biased toward polar residues: residues 107–117 (VHQQTPSSHAW), 130–139 (PGSNSHQPLI), and 151–160 (MLGPQASSLH). Basic and acidic residues predominate over residues 162–171 (SMRDPLHDDP). Residues 194-268 (EDAPSSDDLE…LLNKWLEETD (75 aa)) enclose the POU-specific domain. Residues 286-345 (KRKKRTSIEVGVKGALENHFLKCPKPSAHEITSLADSLQLEKEVVRVWFCNRRQKEKRMT) constitute a DNA-binding region (homeobox).

The protein belongs to the POU transcription factor family. Class-3 subfamily.

It localises to the nucleus. Its function is as follows. Acts as a transcription factor. May play a role in neuronal differentiation. This is POU domain, class 3, transcription factor 1 from Xenopus tropicalis (Western clawed frog).